Consider the following 376-residue polypeptide: GDSL esterase/lipase At5g55050 (376 aa).

The first 29 residues, 1 to 29 (MPTNNTPFLTIFLLFLGLLRFDSFPGLEA), serve as a signal peptide directing secretion. The Nucleophile role is filled by serine 46. N-linked (GlcNAc...) asparagine glycosylation is found at asparagine 134 and asparagine 245. Catalysis depends on residues aspartate 340 and histidine 344.

This sequence belongs to the 'GDSL' lipolytic enzyme family.

It is found in the secreted. The polypeptide is GDSL esterase/lipase At5g55050 (Arabidopsis thaliana (Mouse-ear cress)).